Reading from the N-terminus, the 253-residue chain is U1 small nuclear ribonucleoprotein A (253 aa).

Residues 23–102 (VTIYINNLNE…KPMRIQYAKT (80 aa)) form the RRM 1 domain. A disordered region spans residues 111–140 (DGTFVPRERRKRNDEKPEKKQKREQHHDVS). The RRM 2 domain maps to 179–253 (NILFVQNLPH…NQMLISYAKK (75 aa)).

This sequence belongs to the RRM U1 A/B'' family. As to quaternary structure, component of the spliceosome where it is associated with snRNP U1.

It localises to the nucleus. Its subcellular location is the nucleolus. In terms of biological role, involved in nuclear pre-mRNA splicing. This Oryza sativa subsp. indica (Rice) protein is U1 small nuclear ribonucleoprotein A.